The chain runs to 159 residues: Capsid protein (159 aa).

The residue at position 2 (serine 2) is an N-acetylserine; by host.

Belongs to the virgaviridae capsid protein family.

The protein localises to the virion. Its function is as follows. Capsid protein self-assembles to form rod-shaped virions about 18 nm in diameter with a central canal enclosing the viral genomic RNA. The chain is Capsid protein (CP) from Tobacco mosaic virus (strain 06) (TMV-06).